The sequence spans 98 residues: Large ribosomal subunit protein uL23 (98 aa).

The protein belongs to the universal ribosomal protein uL23 family. Part of the 50S ribosomal subunit. Contacts protein L29, and trigger factor when it is bound to the ribosome.

Functionally, one of the early assembly proteins it binds 23S rRNA. One of the proteins that surrounds the polypeptide exit tunnel on the outside of the ribosome. Forms the main docking site for trigger factor binding to the ribosome. The chain is Large ribosomal subunit protein uL23 from Rickettsia typhi (strain ATCC VR-144 / Wilmington).